Here is a 600-residue protein sequence, read N- to C-terminus: Glutamine--fructose-6-phosphate aminotransferase [isomerizing] (600 aa).

The active-site Nucleophile; for GATase activity is the C2. Residues 2–217 (CGIVGFIGEQ…DKEIVIVTKE (216 aa)) enclose the Glutamine amidotransferase type-2 domain. 2 SIS domains span residues 283-422 (IRNA…AKGE) and 452-590 (LAKQ…VDKP). Catalysis depends on K595, which acts as the For Fru-6P isomerization activity.

In terms of assembly, homodimer.

It localises to the cytoplasm. The enzyme catalyses D-fructose 6-phosphate + L-glutamine = D-glucosamine 6-phosphate + L-glutamate. Its function is as follows. Catalyzes the first step in hexosamine metabolism, converting fructose-6P into glucosamine-6P using glutamine as a nitrogen source. The chain is Glutamine--fructose-6-phosphate aminotransferase [isomerizing] from Bacillus cereus (strain ATCC 10987 / NRS 248).